We begin with the raw amino-acid sequence, 200 residues long: Dephospho-CoA kinase (200 aa).

One can recognise a DPCK domain in the interval 4-200 (VLALTGGIAT…QLLIKIKEEG (197 aa)). 12–17 (ATGKST) lines the ATP pocket.

This sequence belongs to the CoaE family.

It is found in the cytoplasm. The catalysed reaction is 3'-dephospho-CoA + ATP = ADP + CoA + H(+). Its pathway is cofactor biosynthesis; coenzyme A biosynthesis; CoA from (R)-pantothenate: step 5/5. Functionally, catalyzes the phosphorylation of the 3'-hydroxyl group of dephosphocoenzyme A to form coenzyme A. In Lactobacillus acidophilus (strain ATCC 700396 / NCK56 / N2 / NCFM), this protein is Dephospho-CoA kinase.